We begin with the raw amino-acid sequence, 62 residues long: Large ribosomal subunit protein uL29 (62 aa).

The protein belongs to the universal ribosomal protein uL29 family.

The chain is Large ribosomal subunit protein uL29 from Ruthia magnifica subsp. Calyptogena magnifica.